Reading from the N-terminus, the 175-residue chain is Inorganic pyrophosphatase (175 aa).

Substrate contacts are provided by lysine 30, arginine 44, and tyrosine 56. Positions 66, 71, and 103 each coordinate Mg(2+). Tyrosine 142 contributes to the substrate binding site.

It belongs to the PPase family. Homohexamer. It depends on Mg(2+) as a cofactor.

It localises to the cytoplasm. It catalyses the reaction diphosphate + H2O = 2 phosphate + H(+). In terms of biological role, catalyzes the hydrolysis of inorganic pyrophosphate (PPi) forming two phosphate ions. The sequence is that of Inorganic pyrophosphatase from Pseudomonas aeruginosa (strain ATCC 15692 / DSM 22644 / CIP 104116 / JCM 14847 / LMG 12228 / 1C / PRS 101 / PAO1).